Reading from the N-terminus, the 791-residue chain is Lon protease (791 aa).

The Lon N-terminal domain maps to 3-209 (KPILISRAIV…TILHLLFDQL (207 aa)). 365–372 (GPPGVGKT) serves as a coordination point for ATP. The region spanning 605–790 (TTIPGIVNGM…DEVYNIVFGE (186 aa)) is the Lon proteolytic domain. Catalysis depends on residues S696 and K739.

It belongs to the peptidase S16 family. In terms of assembly, homohexamer. Organized in a ring with a central cavity.

The protein localises to the cytoplasm. The enzyme catalyses Hydrolysis of proteins in presence of ATP.. In terms of biological role, ATP-dependent serine protease that mediates the selective degradation of mutant and abnormal proteins as well as certain short-lived regulatory proteins. Required for cellular homeostasis and for survival from DNA damage and developmental changes induced by stress. Degrades polypeptides processively to yield small peptide fragments that are 5 to 10 amino acids long. Binds to DNA in a double-stranded, site-specific manner. The chain is Lon protease from Ureaplasma parvum serovar 3 (strain ATCC 27815 / 27 / NCTC 11736).